A 325-amino-acid chain; its full sequence is D site-binding protein (325 aa).

Disordered regions lie at residues 1–100 (MARP…PGLL), 124–198 (LEHG…DPDT), and 212–255 (LALS…EQKD). Positions 17-28 (GPTGAPPGGGAL) are enriched in gly residues. 2 stretches are compositionally biased toward low complexity: residues 29 to 38 (LGLRSLLQGT) and 71 to 80 (AGPADASAGA). Serine 86 is subject to Phosphoserine. The span at 88–100 (RGRPGAAPGPGLL) shows a compositional bias: low complexity. Over residues 129-153 (PPSPPPPGGPSPAPSPVRTPAPSPR) the composition is skewed to pro residues. The span at 166 to 176 (PGHAPARAALG) shows a compositional bias: low complexity. Over residues 221–236 (ETFDPRRHRFSEEELK) the composition is skewed to basic and acidic residues. One can recognise a bZIP domain in the interval 255 to 318 (DEKYWSRRYK…SHYRAVLSRY (64 aa)). The basic motif stretch occupies residues 257-279 (KYWSRRYKNNEAAKRSRDARRLK). The segment at 283–297 (ISVRAAFLEKENALL) is leucine-zipper.

This sequence belongs to the bZIP family. PAR subfamily. As to quaternary structure, binds DNA as a homodimer or a heterodimer. Can form a heterodimer with TEF.

It is found in the nucleus. In terms of biological role, this transcriptional activator recognizes and binds to the sequence 5'-RTTAYGTAAY-3' found in the promoter of genes such as albumin, CYP2A4 and CYP2A5. It is not essential for circadian rhythm generation, but modulates important clock output genes. May be a direct target for regulation by the circadian pacemaker component clock. May affect circadian period and sleep regulation. The sequence is that of D site-binding protein (DBP) from Bos taurus (Bovine).